The primary structure comprises 420 residues: Phosphoribosylamine--glycine ligase (420 aa).

Positions 108 to 314 (KQIMVKYGIP…FAQNIDDILH (207 aa)) constitute an ATP-grasp domain. Residue 134–195 (IEEQGAPIVV…EEFLAGEEFS (62 aa)) participates in ATP binding. Residues Glu-284 and Asn-286 each coordinate Mg(2+).

The protein belongs to the GARS family. It depends on Mg(2+) as a cofactor. Mn(2+) is required as a cofactor.

The enzyme catalyses 5-phospho-beta-D-ribosylamine + glycine + ATP = N(1)-(5-phospho-beta-D-ribosyl)glycinamide + ADP + phosphate + H(+). Its pathway is purine metabolism; IMP biosynthesis via de novo pathway; N(1)-(5-phospho-D-ribosyl)glycinamide from 5-phospho-alpha-D-ribose 1-diphosphate: step 2/2. This Streptococcus suis protein is Phosphoribosylamine--glycine ligase.